A 973-amino-acid chain; its full sequence is Protein HypA (973 aa).

This chain is Protein HypA (hypA), found in Clostridium perfringens (strain 13 / Type A).